Reading from the N-terminus, the 247-residue chain is Large ribosomal subunit protein uL30z (247 aa).

The protein belongs to the universal ribosomal protein uL30 family.

In Arabidopsis thaliana (Mouse-ear cress), this protein is Large ribosomal subunit protein uL30z (RPL7A).